Consider the following 83-residue polypeptide: Kunitz-type serine protease inhibitor microlepidin-1 (83 aa).

Residues 1–24 (MSSGGLLLLLGLLTLWEVLTPVSS) form the signal peptide. The region spanning 31–81 (CELPADTGPCRVGFPSFYYNPDEKKCLEFIYGGCEGNANNFITKEECESTC) is the BPTI/Kunitz inhibitor domain. 3 disulfides stabilise this stretch: cysteine 31/cysteine 81, cysteine 40/cysteine 64, and cysteine 56/cysteine 77.

Belongs to the venom Kunitz-type family. As to expression, expressed by the venom gland.

Its subcellular location is the secreted. Its function is as follows. Serine protease inhibitor. The chain is Kunitz-type serine protease inhibitor microlepidin-1 from Oxyuranus microlepidotus (Inland taipan).